Here is a 128-residue protein sequence, read N- to C-terminus: Ribonuclease pancreatic (128 aa).

Over residues 1–13 (GESRAEKFQRQHM) the composition is skewed to basic and acidic residues. A disordered region spans residues 1–24 (GESRAEKFQRQHMDSGSSPSSSST). Substrate is bound by residues K7 and R10. H12 acts as the Proton acceptor in catalysis. Intrachain disulfides connect C26–C84, C40–C95, C58–C110, and C65–C72. An N-linked (GlcNAc...) asparagine glycan is attached at N34. Residues 41–45 (KSVNT), K66, and R85 each bind substrate. Catalysis depends on H119, which acts as the Proton donor.

This sequence belongs to the pancreatic ribonuclease family. As to quaternary structure, monomer. Interacts with and forms tight 1:1 complexes with RNH1. Dimerization of two such complexes may occur. Interaction with RNH1 inhibits this protein. As to expression, pancreas and other tissues and body fluids (indicating it may have other physiological functions besides its role in digestion).

It is found in the secreted. The enzyme catalyses an [RNA] containing cytidine + H2O = an [RNA]-3'-cytidine-3'-phosphate + a 5'-hydroxy-ribonucleotide-3'-[RNA].. It carries out the reaction an [RNA] containing uridine + H2O = an [RNA]-3'-uridine-3'-phosphate + a 5'-hydroxy-ribonucleotide-3'-[RNA].. Endonuclease that catalyzes the cleavage of RNA on the 3' side of pyrimidine nucleotides. Acts on single-stranded and double-stranded RNA. This Semnopithecus entellus (Northern plains gray langur) protein is Ribonuclease pancreatic (RNASE1).